The primary structure comprises 365 residues: Flagellar P-ring protein (365 aa).

A signal peptide spans 1 to 19; it reads MIKFLSALILLLVTTAAQA.

Belongs to the FlgI family. In terms of assembly, the basal body constitutes a major portion of the flagellar organelle and consists of four rings (L,P,S, and M) mounted on a central rod.

It is found in the periplasm. The protein localises to the bacterial flagellum basal body. Its function is as follows. Assembles around the rod to form the L-ring and probably protects the motor/basal body from shearing forces during rotation. This chain is Flagellar P-ring protein, found in Shigella boydii serotype 4 (strain Sb227).